We begin with the raw amino-acid sequence, 307 residues long: Ribosomal protein L11 methyltransferase (307 aa).

S-adenosyl-L-methionine-binding residues include Thr162, Gly183, Asp205, and Asn244.

It belongs to the methyltransferase superfamily. PrmA family.

The protein localises to the cytoplasm. It catalyses the reaction L-lysyl-[protein] + 3 S-adenosyl-L-methionine = N(6),N(6),N(6)-trimethyl-L-lysyl-[protein] + 3 S-adenosyl-L-homocysteine + 3 H(+). Methylates ribosomal protein L11. This is Ribosomal protein L11 methyltransferase from Bordetella bronchiseptica (strain ATCC BAA-588 / NCTC 13252 / RB50) (Alcaligenes bronchisepticus).